A 328-amino-acid chain; its full sequence is Probable G-protein coupled receptor 82 (328 aa).

Over 1–11 the chain is Extracellular; that stretch reads MTNNSTCIQPS. Asn3 and Asn4 each carry an N-linked (GlcNAc...) asparagine glycan. The helical transmembrane segment at 12-32 threads the bilayer; the sequence is VISTTALPVTYIFLFIIGLFG. The Cytoplasmic segment spans residues 33 to 55; it reads NSLAQWVFLTKIGKKTSTHIYLA. The helical transmembrane segment at 56-76 threads the bilayer; that stretch reads NLVTANLLVCTAMPFMGIYFL. The Extracellular portion of the chain corresponds to 77 to 92; the sequence is RGFYWKYQSVQCRLVN. The chain crosses the membrane as a helical span at residues 93-115; sequence FLGTLSMHVSMFVSLLILSWIAI. The Cytoplasmic segment spans residues 116–156; it reads SRYATLMKKESKQEATSCYERMFYGHVLKRFRQPNFARTMC. A helical membrane pass occupies residues 157–177; the sequence is IYIWGVVLVIIIPVTLYYSVV. Topologically, residues 178-197 are extracellular; sequence EATEEGQSQCYNRQMELGAR. Residues 198–218 form a helical membrane-spanning segment; the sequence is PSQIAGLIGTTFIGFSFLVVV. The Cytoplasmic portion of the chain corresponds to 219-251; it reads TSYYSLVSHLRRVRTCTSITEKDLTYRSVKRHL. The chain crosses the membrane as a helical span at residues 252–272; it reads LIIQVLLVVCFLPYSIFKPIF. At 273 to 328 the chain is on the extracellular side; sequence YVLHQREGDCQQLNYLIEAKNILTCLASARSSTDPIIFLLLDKTFKKTLYGLLTKS.

This sequence belongs to the G-protein coupled receptor 1 family.

The protein resides in the cell membrane. Orphan receptor. The sequence is that of Probable G-protein coupled receptor 82 (Gpr82) from Mus musculus (Mouse).